Reading from the N-terminus, the 604-residue chain is Aspartate--tRNA(Asp/Asn) ligase (604 aa).

Glutamate 177 lines the L-aspartate pocket. Residues glutamine 201–lysine 204 are aspartate. Arginine 223 serves as a coordination point for L-aspartate. Residues arginine 223–glutamate 225 and glutamine 232 each bind ATP. An L-aspartate-binding site is contributed by histidine 457. Glutamate 495 is an ATP binding site. Arginine 502 provides a ligand contact to L-aspartate. Glycine 547 to arginine 550 contacts ATP.

Belongs to the class-II aminoacyl-tRNA synthetase family. Type 1 subfamily. In terms of assembly, homodimer.

The protein localises to the cytoplasm. It catalyses the reaction tRNA(Asx) + L-aspartate + ATP = L-aspartyl-tRNA(Asx) + AMP + diphosphate. Aspartyl-tRNA synthetase with relaxed tRNA specificity since it is able to aspartylate not only its cognate tRNA(Asp) but also tRNA(Asn). Reaction proceeds in two steps: L-aspartate is first activated by ATP to form Asp-AMP and then transferred to the acceptor end of tRNA(Asp/Asn). In Synechococcus sp. (strain RCC307), this protein is Aspartate--tRNA(Asp/Asn) ligase.